Here is a 55-residue protein sequence, read N- to C-terminus: Small polypeptide DEVIL 10 (55 aa).

N7 is a glycosylation site (N-linked (GlcNAc...) asparagine). The required for DVL/RTFL small polypeptide activity stretch occupies residues 19–50 (RFGDRCLLMAKQQRTRLYILRRCVSMLLCWHD). A helical transmembrane segment spans residues 32 to 48 (RTRLYILRRCVSMLLCW).

Belongs to the DVL/RTFL small polypeptides family.

Its subcellular location is the cell membrane. Its function is as follows. Small polypeptide acting as a regulatory molecule which coordinates cellular responses required for differentiation, growth and development, probably by restricting polar cell proliferation in lateral organs and coordinating socket cell recruitment and differentiation at trichome sites. This is Small polypeptide DEVIL 10 from Arabidopsis thaliana (Mouse-ear cress).